The sequence spans 253 residues: Triosephosphate isomerase (253 aa).

Residue 9–11 participates in substrate binding; it reads NWK. The active-site Electrophile is the His-95. Glu-167 functions as the Proton acceptor in the catalytic mechanism. Residues Gly-173, Ser-213, and 234–235 each bind substrate; that span reads GG. The residue at position 213 (Ser-213) is a Phosphoserine.

Belongs to the triosephosphate isomerase family. As to quaternary structure, homodimer.

It is found in the cytoplasm. The catalysed reaction is D-glyceraldehyde 3-phosphate = dihydroxyacetone phosphate. The protein operates within carbohydrate biosynthesis; gluconeogenesis. Its pathway is carbohydrate degradation; glycolysis; D-glyceraldehyde 3-phosphate from glycerone phosphate: step 1/1. In terms of biological role, involved in the gluconeogenesis. Catalyzes stereospecifically the conversion of dihydroxyacetone phosphate (DHAP) to D-glyceraldehyde-3-phosphate (G3P). This Geobacillus thermodenitrificans (strain NG80-2) protein is Triosephosphate isomerase.